We begin with the raw amino-acid sequence, 938 residues long: Isoleucine--tRNA ligase (938 aa).

Positions 58–68 match the 'HIGH' region motif; it reads PYANGSIHIGH. Lys-183 carries the N6-acetyllysine modification. Glu-561 is an L-isoleucyl-5'-AMP binding site. Positions 602–606 match the 'KMSKS' region motif; it reads KMSKS. Lys-605 contacts ATP. Zn(2+) is bound by residues Cys-901, Cys-904, Cys-921, and Cys-924.

Belongs to the class-I aminoacyl-tRNA synthetase family. IleS type 1 subfamily. In terms of assembly, monomer. The cofactor is Zn(2+).

Its subcellular location is the cytoplasm. The enzyme catalyses tRNA(Ile) + L-isoleucine + ATP = L-isoleucyl-tRNA(Ile) + AMP + diphosphate. Functionally, catalyzes the attachment of isoleucine to tRNA(Ile). As IleRS can inadvertently accommodate and process structurally similar amino acids such as valine, to avoid such errors it has two additional distinct tRNA(Ile)-dependent editing activities. One activity is designated as 'pretransfer' editing and involves the hydrolysis of activated Val-AMP. The other activity is designated 'posttransfer' editing and involves deacylation of mischarged Val-tRNA(Ile). The sequence is that of Isoleucine--tRNA ligase from Shigella dysenteriae serotype 1 (strain Sd197).